The sequence spans 24 residues: Brevinin-1 (24 aa).

An intrachain disulfide couples Cys18 to Cys24.

This sequence belongs to the frog skin active peptide (FSAP) family. Brevinin subfamily. Expressed by the skin glands.

It is found in the secreted. Functionally, shows antibacterial activity against representative Gram-negative and Gram-positive bacterial species, and a very high hemolytic activity. This Pelophylax porosus brevipodus (Nagoya Daruma pond frog) protein is Brevinin-1.